We begin with the raw amino-acid sequence, 661 residues long: Vasorin (661 aa).

A signal peptide spans Met-1–Thr-19. The 31-residue stretch at Glu-20–Pro-50 folds into the LRRNT domain. The Extracellular segment spans residues Glu-20–Thr-563. LRR repeat units follow at residues Thr-52–Gly-72, Gly-75–Asn-96, Asn-99–Gly-120, Arg-123–Gly-144, Ser-147–His-168, Leu-169–Ala-189, Asn-191–Gly-212, Asn-215–Thr-237, Lys-238–Leu-258, and Pro-259–Ser-281. An N-linked (GlcNAc...) asparagine glycan is attached at Asn-99. The LRRCT domain maps to Asn-293–Ala-346. The segment covering Thr-348–Thr-385 has biased composition (low complexity). Residues Thr-348 to Thr-395 form a disordered region. The EGF-like domain maps to Glu-403–Glu-440. 3 disulfides stabilise this stretch: Cys-407-Cys-418, Cys-412-Cys-428, and Cys-430-Cys-439. The Fibronectin type-III domain maps to Glu-455–Thr-543. Residues Asn-518 and Asn-561 are each glycosylated (N-linked (GlcNAc...) asparagine). The helical transmembrane segment at Leu-564 to Ala-584 threads the bilayer. Residues Cys-585–Phe-661 lie on the Cytoplasmic side of the membrane. The segment at Lys-591–Phe-661 is disordered. Residues Asp-606–Glu-623 show a composition bias toward basic and acidic residues.

The protein localises to the membrane. Functionally, may act as an inhibitor of TGF-beta signaling. The polypeptide is Vasorin (vasn) (Xenopus tropicalis (Western clawed frog)).